The sequence spans 472 residues: Ras-GEF domain-containing family member 1B (472 aa).

An N-terminal Ras-GEF domain is found at Gln-34–Ala-164. Residues Asp-204 to Pro-452 form the Ras-GEF domain.

Its function is as follows. Guanine nucleotide exchange factor (GEF) with specificity for rap2a and other Ras family proteins (in vitro). The sequence is that of Ras-GEF domain-containing family member 1B (rasgef1b) from Xenopus tropicalis (Western clawed frog).